A 570-amino-acid chain; its full sequence is PTS system lactose-specific EIICB component (570 aa).

One can recognise a PTS EIIC type-3 domain in the interval 9 to 410; that stretch reads IEKGKPFFEK…VVDIIIYYPF (402 aa). A run of 9 helical transmembrane segments spans residues 31–51, 65–85, 104–124, 133–153, 178–198, 223–243, 283–303, 340–360, and 382–402; these read GFIS…IAYV, AILM…VAGT, INFI…ASDP, AFMG…TVIV, FKDL…DLVI, GWIG…VGIH, MFIV…MFMW, VFFI…KLFV, and IIMG…LIVV. In terms of domain architecture, PTS EIIB type-3 spans 467 to 570; that stretch reads QTNVLVLCAG…LDFVQQQFEN (104 aa). Cysteine 474 serves as the catalytic Phosphocysteine intermediate; for EIIB activity. Cysteine 474 is subject to Phosphocysteine; by EIIA.

It localises to the cell membrane. The enzyme catalyses lactose(out) + N(pros)-phospho-L-histidyl-[protein] = lactose 6-phosphate(in) + L-histidyl-[protein]. In terms of biological role, the phosphoenolpyruvate-dependent sugar phosphotransferase system (sugar PTS), a major carbohydrate active transport system, catalyzes the phosphorylation of incoming sugar substrates concomitantly with their translocation across the cell membrane. The enzyme II LacEF PTS system is involved in lactose transport. This is PTS system lactose-specific EIICB component from Staphylococcus aureus (strain N315).